A 390-amino-acid chain; its full sequence is Digeranylgeranylglycerophospholipid reductase (390 aa).

FAD is bound by residues A18, E37, C48, A49, A51, R98, V122, D278, G290, and I291. An a 2,3-bis-O-(geranylgeranyl)-sn-glycerol 1-phospholipid-binding site is contributed by V368.

The protein belongs to the geranylgeranyl reductase family. DGGGPL reductase subfamily. Requires FAD as cofactor.

It catalyses the reaction a 2,3-bis-O-phytanyl-sn-glycerol 1-phospholipid + 8 A = a 2,3-bis-O-(geranylgeranyl)-sn-glycerol 1-phospholipid + 8 AH2. The catalysed reaction is 2,3-bis-O-(phytanyl)-sn-glycerol 1-phosphate + 8 A = 2,3-bis-O-(geranylgeranyl)-sn-glycerol 1-phosphate + 8 AH2. The enzyme catalyses CDP-2,3-bis-O-(geranylgeranyl)-sn-glycerol + 8 AH2 = CDP-2,3-bis-O-(phytanyl)-sn-glycerol + 8 A. It carries out the reaction archaetidylserine + 8 AH2 = 2,3-bis-O-phytanyl-sn-glycero-3-phospho-L-serine + 8 A. The protein operates within membrane lipid metabolism; glycerophospholipid metabolism. Its function is as follows. Is involved in the reduction of 2,3-digeranylgeranylglycerophospholipids (unsaturated archaeols) into 2,3-diphytanylglycerophospholipids (saturated archaeols) in the biosynthesis of archaeal membrane lipids. Catalyzes the formation of archaetidic acid (2,3-di-O-phytanyl-sn-glyceryl phosphate) from 2,3-di-O-geranylgeranylglyceryl phosphate (DGGGP) via the hydrogenation of each double bond of the isoprenoid chains. Is also probably able to reduce double bonds of geranyl groups in CDP-2,3-bis-O-(geranylgeranyl)-sn-glycerol and archaetidylserine, thus acting at various stages in the biosynthesis of archaeal membrane lipids. The chain is Digeranylgeranylglycerophospholipid reductase from Methanococcus maripaludis (strain C7 / ATCC BAA-1331).